Consider the following 288-residue polypeptide: UTP--glucose-1-phosphate uridylyltransferase (288 aa).

Belongs to the UDPGP type 2 family.

The catalysed reaction is alpha-D-glucose 1-phosphate + UTP + H(+) = UDP-alpha-D-glucose + diphosphate. The protein operates within glycolipid metabolism; diglucosyl-diacylglycerol biosynthesis. Catalyzes the formation of UDP-glucose from glucose-1-phosphate and UTP. This is an intermediate step in the biosynthesis of diglucosyl-diacylglycerol (Glc2-DAG), i.e. the predominant glycolipid found in the S.aureus membrane, which is also used as a membrane anchor for lipoteichoic acid (LTA). This chain is UTP--glucose-1-phosphate uridylyltransferase (gtaB), found in Staphylococcus aureus (strain USA300).